Here is a 285-residue protein sequence, read N- to C-terminus: Putative cysteine-rich repeat secretory protein 14 (285 aa).

Positions 1-30 (MSSFCLSKHLILVPILVMMAQLLLIRNVLS) are cleaved as a signal peptide. Gnk2-homologous domains lie at 37-143 (YLYH…SIST) and 161-273 (RPNA…RYPF).

It belongs to the cysteine-rich repeat secretory protein family.

Its subcellular location is the secreted. The sequence is that of Putative cysteine-rich repeat secretory protein 14 (CRRSP14) from Arabidopsis thaliana (Mouse-ear cress).